The sequence spans 382 residues: Apolipoprotein A-IV (382 aa).

The signal sequence occupies residues 1 to 20; the sequence is MFLKAVVLTLSLVAVTGAQA. Repeat copies occupy residues 33–54, 60–81, 82–103, 115–136, 137–158, 159–180, 181–202, 203–224, 225–246, 247–268, 269–286, 287–308, and 309–330. The interval 33–330 is 13 X 22 AA approximate tandem repeats; that stretch reads DYFSQLSNNA…QVEELRQKLG (298 aa).

The protein belongs to the apolipoprotein A1/A4/E family. Homodimer. In terms of processing, phosphorylation sites are present in the extracellular medium.

Its subcellular location is the secreted. Functionally, may have a role in chylomicrons and VLDL secretion and catabolism. Required for efficient activation of lipoprotein lipase by ApoC-II; potent activator of LCAT. Apoa-IV is a major component of HDL and chylomicrons. This Mirounga angustirostris (Northern elephant seal) protein is Apolipoprotein A-IV (APOA4).